A 382-amino-acid chain; its full sequence is Probable cytosolic iron-sulfur protein assembly protein 1 (382 aa).

WD repeat units lie at residues Ala-9 to Arg-48, Thr-55 to Glu-107, Gly-138 to Glu-178, Glu-185 to Gly-224, Gly-231 to Asn-278, Ala-303 to Glu-342, and His-349 to Glu-382.

The protein belongs to the WD repeat CIA1 family. In terms of assembly, interacts with NAR1.

Its subcellular location is the cytoplasm. The protein resides in the nucleus. Its function is as follows. Essential component of the cytosolic iron-sulfur (Fe/S) protein assembly machinery. Required for the maturation of extramitochondrial Fe/S proteins. In Meyerozyma guilliermondii (strain ATCC 6260 / CBS 566 / DSM 6381 / JCM 1539 / NBRC 10279 / NRRL Y-324) (Yeast), this protein is Probable cytosolic iron-sulfur protein assembly protein 1.